The chain runs to 66 residues: Photosystem II reaction center protein J (66 aa).

The segment at 1–27 (MSGKKSGLPDGRVPDRNPDGTPAVPWK) is disordered. Residues 37-57 (LWLVATAGGMAVMFVVGLFFY) form a helical membrane-spanning segment.

Belongs to the PsbJ family. In terms of assembly, PSII is composed of 1 copy each of membrane proteins PsbA, PsbB, PsbC, PsbD, PsbE, PsbF, PsbH, PsbI, PsbJ, PsbK, PsbL, PsbM, PsbT, PsbX, PsbY, PsbZ, Psb30/Ycf12, peripheral proteins PsbO, CyanoQ (PsbQ), PsbU, PsbV and a large number of cofactors. It forms dimeric complexes.

The protein localises to the cellular thylakoid membrane. One of the components of the core complex of photosystem II (PSII). PSII is a light-driven water:plastoquinone oxidoreductase that uses light energy to abstract electrons from H(2)O, generating O(2) and a proton gradient subsequently used for ATP formation. It consists of a core antenna complex that captures photons, and an electron transfer chain that converts photonic excitation into a charge separation. This Synechococcus sp. (strain RCC307) protein is Photosystem II reaction center protein J.